The primary structure comprises 241 residues: Large ribosomal subunit protein uL3 (241 aa).

Disordered stretches follow at residues 139–166 (VSHR…PGHM) and 214–241 (ADAP…QEGA). N5-methylglutamine is present on Q151. Low complexity predominate over residues 229 to 241 (AAAEAPAAEQEGA).

In terms of assembly, part of the 50S ribosomal subunit. Forms a cluster with proteins L14 and L19. Post-translationally, methylated, on either Lys-155 or Lys-158. Methylated by PrmB.

Functionally, one of the primary rRNA binding proteins, it binds directly near the 3'-end of the 23S rRNA, where it nucleates assembly of the 50S subunit. The chain is Large ribosomal subunit protein uL3 from Rhodopseudomonas palustris (strain ATCC BAA-98 / CGA009).